Here is a 144-residue protein sequence, read N- to C-terminus: MIELDAINPNNLKILEVINEKCFDPEIIIFPTSFYKDTISVGPLAQYAYFNQVCVGAVRCKKETHNKSHKIQILSLAVLPAYRNRSIGTKLLEYACETAAEGKAKEIYIKLSPKLDVSEWFIHRGFIIDESSKTEDSVLLSKKL.

In terms of domain architecture, N-acetyltransferase spans 2–144; sequence IELDAINPNN…EDSVLLSKKL (143 aa).

This sequence belongs to the acetyltransferase family.

It localises to the cytoplasm. It is found in the nucleus. This is an uncharacterized protein from Schizosaccharomyces pombe (strain 972 / ATCC 24843) (Fission yeast).